The following is a 481-amino-acid chain: MQLFWHRRDLRTTDNRGLAAAAPGVTAVDGGHDQGPVAAVFCFDDEVLAHAAPPRVAFMLDALAALRERYRDLGSDLIVRHGDPAAVLPAVANDLDATRVVWNHDYSGLATDRDAGVRDALDAAGVAHAQFHDAVHHRPGEIRTNAGDPYSVYTYFWRKWQDREKNPPAPEPEPADLAADTALADTSPLPSVQELGFAEPEAAVPDAGTAAARSLLDAFRESGDIYRYEDRRDYPHEEPTSRLSPHLKFGTIGIRTVYEAARAAKSDADTDDERENVAAFIGQLAWREFYAQVLYFNQNVVSENFKAYEHPIEWRDDPAALQAWKDGETGYPIVDAGMRQLRAEAYMHNRVRMIVAAFLTKDLLVDWRAGYDWFREKLADHDTANDNGGWQWAASTGTDAQPYFRVFNPMTQGERYDPDADYITEFVPELRDVPADAIHSWHELSLSERRRHAPEYPDPIVDHSQRREDAIAMFERARGDE.

Residues M1–H136 enclose the Photolyase/cryptochrome alpha/beta domain. FAD is bound at residue Y228. R232 is a binding site for DNA. T240 to S244 is a binding site for FAD. Interaction with DNA stretches follow at residues Q283–Y290 and N349–R350. Residue D380–D382 participates in FAD binding. Q412 is a DNA binding site.

The protein belongs to the DNA photolyase class-1 family. Monomer. FAD is required as a cofactor. Coenzyme F420-(gamma-Glu)n serves as cofactor.

The enzyme catalyses cyclobutadipyrimidine (in DNA) = 2 pyrimidine residues (in DNA).. Functionally, involved in repair of UV radiation-induced DNA damage. Catalyzes the light-dependent monomerization (300-600 nm) of cyclobutyl pyrimidine dimers (in cis-syn configuration), which are formed between adjacent bases on the same DNA strand upon exposure to ultraviolet radiation. The protein is Deoxyribodipyrimidine photo-lyase (phr) of Halobacterium salinarum (strain ATCC 700922 / JCM 11081 / NRC-1) (Halobacterium halobium).